We begin with the raw amino-acid sequence, 522 residues long: Cyclic GMP-AMP synthase (522 aa).

A disordered region spans residues 1 to 144 (MQPWHGKAMQ…PPGPWDVPSP (144 aa)). DNA-binding regions lie at residues 1 to 160 (MQPW…DAAP) and 173 to 215 (KLSR…GSYY). K7 is subject to N6-acetyllysine. S13 is subject to Phosphoserine. Position 21 is an N6-acetyllysine (K21). At S37 the chain carries Phosphoserine. K47, K50, K56, K62, and K63 each carry N6-acetyllysine. S64 is subject to Phosphoserine. Residues 64–73 (SAPDTQERPP) are compositionally biased toward basic and acidic residues. Residues 64–75 (SAPDTQERPPVR) are required for association with the cell membrane. Residue T68 is modified to Phosphothreonine. N6-acetyllysine is present on residues K82 and K83. Residues 88–97 (AQDTQPSDAT) show a composition bias toward polar residues. At T91 the chain carries Phosphothreonine. Residues S98, S116, and S129 each carry the phosphoserine modification. The segment covering 98–118 (SAPGAEGLEPPAAREPALSRA) has biased composition (low complexity). The required for activation upon DNA viral infection stretch occupies residues 120–160 (SCRQRGARCSTKPRPPPGPWDVPSPGLPVSAPILVRRDAAP). An N6-lactoyllysine modification is found at K131. Over residues 132 to 144 (PRPPPGPWDVPSP) the composition is skewed to pro residues. At S143 the chain carries Phosphoserine. The short motif at 169-174 (LEKLKL) is the Nuclear export signal element. K173 is covalently cross-linked (Glycyl lysine isopeptide (Lys-Gly) (interchain with G-Cter in ubiquitin)). Position 191 is a polyADP-ribosyl aspartic acid (D191). N210 carries the post-translational modification (Microbial infection) Deamidated asparagine; by herpes simplex virus 1/HHV-1 UL37. Residue T211 participates in GTP binding. S213 is subject to Phosphoserine. S213 contacts ATP. Y215 is subject to Phosphotyrosine; by BLK. Residues E225 and D227 each coordinate Mg(2+). 225 to 227 (EFD) contacts ATP. D227 is a binding site for 2',3'-cGAMP. K231 participates in a covalent cross-link: Glycyl lysine isopeptide (Lys-Gly) (interchain with G-Cter in SUMO). A Glycyl lysine isopeptide (Lys-Gly) (interchain with G-Cter in ubiquitin) cross-link involves residue K285. At E286 the chain carries 5-glutamyl polyglutamate. The Nuclear localization signal motif lies at 295-305 (DVIMKRKRGGS). Positions 299-302 (KRKR) match the KRKR-loop motif. S305 carries the post-translational modification Phosphoserine; by CDK1 and PKB. E314 carries the post-translational modification 5-glutamyl glutamate. D319 contributes to the GTP binding site. D319 provides a ligand contact to Mg(2+). D319 lines the 2',3'-cGAMP pocket. Residues 341–382 (QNWLSAKVRKQLRLKPFYLVPKHAKEGNGFQEETWRLSFSHI) are interaction with collided ribosomes. Residue K347 forms a Glycyl lysine isopeptide (Lys-Gly) (interchain with G-Cter in SUMO); alternate linkage. A Glycyl lysine isopeptide (Lys-Gly) (interchain with G-Cter in ubiquitin); alternate cross-link involves residue K347. Positions 362 and 376 each coordinate 2',3'-cGAMP. 376–383 (RLSFSHIE) provides a ligand contact to GTP. Position 380–383 (380–383 (SHIE)) interacts with ATP. An N6-acetyllysine modification is found at K384. K384 participates in a covalent cross-link: Glycyl lysine isopeptide (Lys-Gly) (interchain with G-Cter in SUMO); alternate. K384 participates in a covalent cross-link: Glycyl lysine isopeptide (Lys-Gly) (interchain with G-Cter in ubiquitin); alternate. Positions 384 to 407 (KEILNNHGKSKTCCENKEEKCCRK) are DNA-binding. N389 bears the (Microbial infection) Deamidated asparagine; by herpes simplex virus 1/HHV-1 UL37 mark. A Zn(2+)-binding site is contributed by H390. N6-acetyllysine occurs at positions 392 and 394. A Glycyl lysine isopeptide (Lys-Gly) (interchain with G-Cter in SUMO) cross-link involves residue K394. The Zn(2+) site is built by C396, C397, and C404. Residues C404 and C405 are each lipidated (S-palmitoyl cysteine). Residues K411, K414, K427, and K428 each participate in a glycyl lysine isopeptide (Lys-Gly) (interchain with G-Cter in ubiquitin) cross-link. K414 carries the post-translational modification N6-acetyllysine. ATP is bound at residue K414. The KKH-loop motif lies at 427–429 (KKH). A phosphoserine mark is found at S434 and S435. 435–439 (SYHVK) provides a ligand contact to ATP. Residues Q451 and Q454 each carry the (Microbial infection) Deamidated glutamine; by herpes simplex virus 1/HHV-1 UL37 modification. The S-palmitoyl cysteine moiety is linked to residue C474. K479 is covalently cross-linked (Glycyl lysine isopeptide (Lys-Gly) (interchain with G-Cter in SUMO); alternate). K479 is covalently cross-linked (Glycyl lysine isopeptide (Lys-Gly) (interchain with G-Cter in ubiquitin); alternate). The residue at position 506 (K506) is an N6-methyllysine.

It belongs to the mab-21 family. In terms of assembly, monomer in the absence of DNA. Homodimer in presence of dsDNA: forms a 2:2 dimer with two enzymes binding to two DNA molecules. Interacts with nucleosomes; interaction is mainly mediated via histones H2A and H2B and inactivates the nucleotidyltransferase activity by blocking DNA-binding and subsequent activation. Interacts with PQBP1 (via WW domain). Interacts with TRIM14; this interaction recruits USP14, leading to deubiquitinate and stabilize CGAS and promote type I interferon production. Interacts with ZCCHC3; promoting sensing of dsDNA by CGAS. Interacts (when not monomethylated) with (poly-ADP-ribosylated) PARP1; interaction takes place in the nucleus and prevents the formation of the PARP1-TIMELESS complex. Interacts (when monomethylated) with SGF29; interaction with SGF29 prevents interaction with PARP1. Interacts with PCBP2; preventing the formation of liquid-like droplets in which CGAS is activated. Interacts with IRGM; promoting CGAS degradation. Interacts with DDX41. As to quaternary structure, (Microbial infection) Interacts with herpes virus 8/HHV-8 protein ORF52; this interaction inhibits cGAS enzymatic activity by preventing the formation of liquid-like droplets by CGAS. (Microbial infection) Interacts with herpes simplex virus 1 protein UL37; this interaction deaminates CGAS and inhibits its activation. In terms of assembly, (Microbial infection) Interacts with vaccinia virus protein OPG067; this interaction promotes CGAS proteasomal degradation. As to quaternary structure, (Microbial infection) Interacts with cytomegalovirus protein UL31; this interaction promotes dissociation of DNA from CGAS, thereby inhibiting the enzymatic activity of CGAS. (Microbial infection) Interacts with herpes simplex virus 1 tegument protein VP22 (UL49); this interaction inhibits cGAS enzymatic activity by preventing the formation of liquid-like droplets by CGAS. In terms of assembly, (Microbial infection) Interacts with herpesvirus 3 tegument protein VP22 (ORF9); this interaction inhibits cGAS enzymatic activity by preventing the formation of liquid-like droplets by CGAS. As to quaternary structure, (Microbial infection) Interacts with human cytomegalovirus proteins UL42 and UL83; these interactions result in the inhibition of cGAS-STING signaling. Mg(2+) is required as a cofactor. The cofactor is Mn(2+). It depends on Zn(2+) as a cofactor. The N-terminal disordered part (1-160) is phosphorylated by AURKB during the G2-M transition, blocking CGAS liquid phase separation and preventing activation. Phosphorylation at Tyr-215 by BLK promotes cytosolic retention. Localizes into the nucleus following dephosphorylation at Tyr-215. Phosphorylation at Ser-435 activates the nucleotidyltransferase activity. Dephosphorylation at Ser-435 by PPP6C impairs its ability to bind GTP, thereby inactivating it. Phosphorylation at Thr-68 and Ser-213 by PRKDC inhibits its cyclic GMP-AMP synthase activity by impairing homodimerization and activation. Phosphorylation at Ser-305 by AKT (AKT1, AKT2 or AKT3) suppresses the nucleotidyltransferase activity. Phosphorylation at Ser-305 by CDK1 during mitosis leads to its inhibition, thereby preventing CGAS activation by self-DNA during mitosis. Dephosphorylated at Ser-305 by protein phosphatase PP1 upon mitotic exit. Post-translationally, ubiquitinated at Lys-414 via 'Lys-48'-linked polyubiquitin chains, leading to its SQSTM1-mediated autophagic degradation. Interaction with TRIM14 promotes recruitment of USP14, leading to deubiquitinate Lys-414 and stabilize CGAS. Ubiquitinated at Lys-173 and Lys-384 by RNF185 via 'Lys-27'-linked polyubiquitination, promoting CGAS cyclic GMP-AMP synthase activity. Monoubiquitination at Lys-347 by TRIM56 promotes oligomerization and subsequent activation. Monoubiquitination by TRIM41 promotes CGAS activation. Ubiquitination at Lys-285 and Lys-479 via 'Lys-48'-linked polyubiquitination promotes its degradation. Deubiquitination at Lys-285 by USP29 promotes its stabilization. Deubiquitinated by USP27X, promoting its stabilization. Ubiquitinated at Lys-411 via 'Lys-63'-linked polyubiquitin chains by MARCHF8, leading to the inhibition of its DNA binding ability. In cycling cells, nucleosome-bound CGAS is ubiquitinated at Lys-427 and Lys-428 via 'Lys-48'-linked polyubiquitin chains by the ECS(SPSB3) complex, leading to its degradation: ubiquitination and degradation of nuclear CGAS during G1 and G2 phases is required to promote low intranuclear CGAS abundance before the next mitotic cycle. In terms of processing, sumoylated at Lys-231 and Lys-479 by TRIM38 in uninfected cells and during the early phase of viral infection, promoting its stability by preventing ubiquitination at Lys-285 and Lys-479, and subsequent degradation. Desumoylated by SENP2 during the late phase of viral infection. Sumoylation at Lys-347, Lys-384 and Lys-394 prevents DNA-binding, oligomerization and nucleotidyltransferase activity. Desumoylation at Lys-347, Lys-384 and Lys-394 by SENP7 relieves inhibition and activates CGAS. Polyglutamylated by TTLL6 at Glu-286, leading to impair DNA-binding activity. Monoglutamylated at Glu-314 by TTLL4, leading to impair the nucleotidyltransferase activity. Deglutamylated by AGBL5/CCP5 and AGBL6/CCP6. Post-translationally, acetylation at Lys-384, Lys-394 and Lys-414 inhibits the cyclic GMP-AMP synthase activity. Deacetylated upon cytosolic DNA challenge such as viral infections. Acetylation can be mediated by aspirin (acetylsalicylate) drug, which directly acetylates CGAS. Acetylation by aspirin efficiently inhibits CGAS-mediated immune responses and is able to suppress self-DNA-induced autoimmunity. Acetylation at Lys-47, Lys-56, Lys-62 and Lys-83 by KAT5 increases the cyclic GMP-AMP synthase activity by promoting DNA-binding and subsequent activation. In terms of processing, proteolytically cleaved by apoptotic caspases during apoptosis, leading to its inactivation. The damage of the nucleus and the mitochondria during apoptosis leads to leakage of nuclear and mitochondrial DNA, which activate CGAS: cleavage and inactivation during apoptosis in required to prevent cytokine overproduction. Cleaved by CASP3 at Asp-319 during virus-induced apoptosis, thereby inactivating it and preventing cytokine overproduction. Cleaved by CASP1 at Asp-140 and Asp-157 upon DNA virus infection; the cleavage impairs cGAMP production. Also cleaved by the pyroptotic CASP4 and CASP5 during non-canonical inflammasome activation; they don't cut at the same sites than CASP1. Degraded via selective autophagy following interaction with IRGM. IRGM promotes CGAS recruitment to autophagosome membranes, promoting its SQSTM1/p62-dependent autophagic degradation. Post-translationally, poly-ADP-ribosylation at Asp-191 by PARP1 impairs DNA-binding, thereby preventing the cyclic GMP-AMP synthase activity. In terms of processing, palmitoylation at Cys-474 by ZDHHC18 impairs DNA-binding, thereby preventing the cyclic GMP-AMP synthase activity. Palmitoylation at Cys-404 and Cys-405 by ZDHHC9 promotes homodimerization and cyclic GMP-AMP synthase activity. Depalmitoylation at Cys-404 and Cys-405 by LYPLAL1 impairs homodimerization and cyclic GMP-AMP synthase activity. Monomethylated at Lys-506 by SETD7. Monomethylation promotes interaction with SGF29, preventing interaction between PARP1 nad SGF29. Demethylation by RIOX1 promotes interaction with PARP1, followed by PARP1 inactivation. Post-translationally, lactylation by AARS2 prevents ability to undergo liquid-liquid phase separation (LLPS), thereby inhibiting CGAS activation. In terms of processing, (Microbial infection) Deamidated on 'Asn-210' by herpes simplex virus 1 protein UL37. This modification significantly reduces CGAS-dependent cGAMP production and innate immune signaling induced by dsDNA. (Microbial infection) Degraded by an autophagy-mediated mechanism in presence of Chikungunya virus capsid protein. Expressed in the monocytic cell line THP1.

It is found in the nucleus. The protein localises to the chromosome. It localises to the cell membrane. Its subcellular location is the cytoplasm. The protein resides in the cytosol. The enzyme catalyses GTP + ATP = 2',3'-cGAMP + 2 diphosphate. It carries out the reaction GTP + ATP = pppGp(2'-5')A + diphosphate. The catalysed reaction is pppGp(2'-5')A = 2',3'-cGAMP + diphosphate. The enzyme activity is strongly increased by double-stranded DNA (dsDNA), but not by single-stranded DNA or RNA. DNA-binding induces the formation of liquid-like droplets in which CGAS is activated. Liquid-like droplets also create a selective environment that restricts entry of negative regulators, such as TREX1 or BANF1/BAF, allowing sensing of DNA. A number of mechanisms exist to restrict its activity toward self-DNA. The nucleotidyltransferase activity is inhibited in the nucleus via its association with nucleosomes: interacts with the acidic patch of histones H2A and H2B, thereby blocking DNA-binding and subsequent activation. CGAS is also inactive when associated with mitotic chromatin. Chromatin-bound CGAS cannot be activated by exogenous DNA in mitotic cells: phosphorylation of the N-terminal disordered part by AURKB during the G2-M transition blocks CGAS liquid phase separation and activation. Activity toward self-DNA is inhibited by BANF1/BAF upon acute loss of nuclear membrane integrity: BANF1/BAF acts by outcompeting CGAS for DNA-binding, thereby preventing CGAS activation. DNA-induced activation at micronuclei is also limited by TREX1, which degrades micronuclear DNA upon nuclear envelope rupture, thereby preventing CGAS activation. CGAS can be released from nucleosomes and activated by MRE11 component of the MRN complex, which displaces CGAS from acidic-patch-mediated sequestration. Acetylation at Lys-384, Lys-394 and Lys-414 inhibits the cyclic GMP-AMP synthase activity. Inhibited by aspirin (acetylsalicylate) drug, which acetylates CGAS. Acetylation by KAT5 increases the cyclic GMP-AMP synthase activity by promoting DNA-binding and subsequent activation. Phosphorylation at Ser-305 suppresses the nucleotidyltransferase activity. Phosphorylation at Ser-435 promotes the cyclic GMP-AMP synthase activity. Phosphorylation at Thr-68 and Ser-213 inhibits its cyclic GMP-AMP synthase activity. Ubiquitination at Lys-173 and Lys-384 via 'Lys-27'-linked polyubiquitination enhances the cyclic GMP-AMP synthase activity. Monoubiquitination at Lys-347 promotes oligomerization and subsequent activation. Sumoylation at Lys-347, Lys-384 and Lys-394 prevents DNA-binding, oligomerization and nucleotidyltransferase activity. The enzyme activity is impaired by the cleavage at Asp-140 and Asp-157 produced by CASP1. In addition to DNA, also activated by collided ribosomes upon translation stress: specifically binds collided ribosomes, promoting its activation and triggering type-I interferon production. Strongly inhibited by compound PF-06928215, which is specific for human protein. Inhibited by small-molecule inhibitors with a pyridoindole tricyclic core G108, G140 and G150. Its activity is regulated as follows. (Microbial infection) Nucleotidyltransferase activity is inhibited by different herpesvirus tegument proteins (Herpes simplex virus 1 tegument protein VP22, herpes virus 8 protein ORF52 and herpesvirus 3 tegument protein VP22/ORF9). Viral tegument proteins act by disrupting liquid-like droplets in which CGAS is activated, thereby preventing CGAS activity. Nucleotidyltransferase that catalyzes the formation of cyclic GMP-AMP (2',3'-cGAMP) from ATP and GTP and plays a key role in innate immunity. Catalysis involves both the formation of a 2',5' phosphodiester linkage at the GpA step and the formation of a 3',5' phosphodiester linkage at the ApG step, producing c[G(2',5')pA(3',5')p]. Acts as a key DNA sensor: directly binds double-stranded DNA (dsDNA), inducing the formation of liquid-like droplets in which CGAS is activated, leading to synthesis of 2',3'-cGAMP, a second messenger that binds to and activates STING1, thereby triggering type-I interferon production. Preferentially recognizes and binds curved long dsDNAs of a minimal length of 40 bp. Acts as a key foreign DNA sensor, the presence of double-stranded DNA (dsDNA) in the cytoplasm being a danger signal that triggers the immune responses. Has antiviral activity by sensing the presence of dsDNA from DNA viruses in the cytoplasm. Also acts as an innate immune sensor of infection by retroviruses, such as HIV-2, by detecting the presence of reverse-transcribed DNA in the cytosol. In contrast, HIV-1 is poorly sensed by CGAS, due to its capsid that cloaks viral DNA from CGAS detection. Detection of retroviral reverse-transcribed DNA in the cytosol may be indirect and be mediated via interaction with PQBP1, which directly binds reverse-transcribed retroviral DNA. Also detects the presence of DNA from bacteria, such as M.tuberculosis. 2',3'-cGAMP can be transferred from producing cells to neighboring cells through gap junctions, leading to promote STING1 activation and convey immune response to connecting cells. 2',3'-cGAMP can also be transferred between cells by virtue of packaging within viral particles contributing to IFN-induction in newly infected cells in a cGAS-independent but STING1-dependent manner. Also senses the presence of neutrophil extracellular traps (NETs) that are translocated to the cytosol following phagocytosis, leading to synthesis of 2',3'-cGAMP. In addition to foreign DNA, can also be activated by endogenous nuclear or mitochondrial DNA. When self-DNA leaks into the cytosol during cellular stress (such as mitochondrial stress, SARS-CoV-2 infection causing severe COVID-19 disease, DNA damage, mitotic arrest or senescence), or is present in form of cytosolic micronuclei, CGAS is activated leading to a state of sterile inflammation. Acts as a regulator of cellular senescence by binding to cytosolic chromatin fragments that are present in senescent cells, leading to trigger type-I interferon production via STING1 and promote cellular senescence. Also involved in the inflammatory response to genome instability and double-stranded DNA breaks: acts by localizing to micronuclei arising from genome instability. Micronuclei, which are frequently found in cancer cells, consist of chromatin surrounded by their own nuclear membrane: following breakdown of the micronuclear envelope, a process associated with chromothripsis, CGAS binds self-DNA exposed to the cytosol, leading to 2',3'-cGAMP synthesis and subsequent activation of STING1 and type-I interferon production. Activated in response to prolonged mitotic arrest, promoting mitotic cell death. In a healthy cell, CGAS is however kept inactive even in cellular events that directly expose it to self-DNA, such as mitosis, when cGAS associates with chromatin directly after nuclear envelope breakdown or remains in the form of postmitotic persistent nuclear cGAS pools bound to chromatin. Nuclear CGAS is inactivated by chromatin via direct interaction with nucleosomes, which block CGAS from DNA binding and thus prevent CGAS-induced autoimmunity. Also acts as a suppressor of DNA repair in response to DNA damage: inhibits homologous recombination repair by interacting with PARP1, the CGAS-PARP1 interaction leading to impede the formation of the PARP1-TIMELESS complex. In addition to DNA, also sense translation stress: in response to translation stress, translocates to the cytosol and associates with collided ribosomes, promoting its activation and triggering type-I interferon production. In contrast to other mammals, human CGAS displays species-specific mechanisms of DNA recognition and produces less 2',3'-cGAMP, allowing a more fine-tuned response to pathogens. The protein is Cyclic GMP-AMP synthase of Homo sapiens (Human).